Consider the following 496-residue polypeptide: Probable cytosol aminopeptidase (496 aa).

The Mn(2+) site is built by K266 and D271. K278 is a catalytic residue. The Mn(2+) site is built by D289, D348, and E350. Residue R352 is part of the active site.

The protein belongs to the peptidase M17 family. It depends on Mn(2+) as a cofactor.

The protein resides in the cytoplasm. It catalyses the reaction Release of an N-terminal amino acid, Xaa-|-Yaa-, in which Xaa is preferably Leu, but may be other amino acids including Pro although not Arg or Lys, and Yaa may be Pro. Amino acid amides and methyl esters are also readily hydrolyzed, but rates on arylamides are exceedingly low.. The enzyme catalyses Release of an N-terminal amino acid, preferentially leucine, but not glutamic or aspartic acids.. Presumably involved in the processing and regular turnover of intracellular proteins. Catalyzes the removal of unsubstituted N-terminal amino acids from various peptides. The protein is Probable cytosol aminopeptidase of Stutzerimonas stutzeri (strain A1501) (Pseudomonas stutzeri).